A 423-amino-acid polypeptide reads, in one-letter code: Glutamate-1-semialdehyde 2,1-aminomutase (423 aa).

The residue at position 266 (Lys-266) is an N6-(pyridoxal phosphate)lysine.

This sequence belongs to the class-III pyridoxal-phosphate-dependent aminotransferase family. HemL subfamily. As to quaternary structure, homodimer. It depends on pyridoxal 5'-phosphate as a cofactor.

It is found in the cytoplasm. The catalysed reaction is (S)-4-amino-5-oxopentanoate = 5-aminolevulinate. It functions in the pathway porphyrin-containing compound metabolism; protoporphyrin-IX biosynthesis; 5-aminolevulinate from L-glutamyl-tRNA(Glu): step 2/2. The chain is Glutamate-1-semialdehyde 2,1-aminomutase from Desulfovibrio desulfuricans (strain ATCC 27774 / DSM 6949 / MB).